The following is a 323-amino-acid chain: Acetylglutamate kinase (323 aa).

Substrate contacts are provided by residues Gly-90–Gly-91, Arg-112, and Asn-218.

It belongs to the acetylglutamate kinase family. ArgB subfamily.

It localises to the cytoplasm. It catalyses the reaction N-acetyl-L-glutamate + ATP = N-acetyl-L-glutamyl 5-phosphate + ADP. Its pathway is amino-acid biosynthesis; L-arginine biosynthesis; N(2)-acetyl-L-ornithine from L-glutamate: step 2/4. Catalyzes the ATP-dependent phosphorylation of N-acetyl-L-glutamate. The protein is Acetylglutamate kinase of Ehrlichia canis (strain Jake).